A 142-amino-acid polypeptide reads, in one-letter code: 3-hydroxyacyl-[acyl-carrier-protein] dehydratase FabZ (142 aa).

The active site involves His-49.

It belongs to the thioester dehydratase family. FabZ subfamily.

The protein resides in the cytoplasm. The catalysed reaction is a (3R)-hydroxyacyl-[ACP] = a (2E)-enoyl-[ACP] + H2O. Involved in unsaturated fatty acids biosynthesis. Catalyzes the dehydration of short chain beta-hydroxyacyl-ACPs and long chain saturated and unsaturated beta-hydroxyacyl-ACPs. The sequence is that of 3-hydroxyacyl-[acyl-carrier-protein] dehydratase FabZ from Deinococcus geothermalis (strain DSM 11300 / CIP 105573 / AG-3a).